Consider the following 203-residue polypeptide: Dual-action ribosomal maturation protein DarP (203 aa).

Disordered stretches follow at residues 1 to 31 and 183 to 203; these read MRPMTRKTRIQPIEHAVEDDDNGYDRPSKSQ and GASDSDDEAAGDAGDDHDDEA. A compositionally biased stretch (acidic residues) spans 186 to 203; sequence DSDDEAAGDAGDDHDDEA.

Belongs to the DarP family.

Its subcellular location is the cytoplasm. Functionally, member of a network of 50S ribosomal subunit biogenesis factors which assembles along the 30S-50S interface, preventing incorrect 23S rRNA structures from forming. Promotes peptidyl transferase center (PTC) maturation. This is Dual-action ribosomal maturation protein DarP from Burkholderia cenocepacia (strain ATCC BAA-245 / DSM 16553 / LMG 16656 / NCTC 13227 / J2315 / CF5610) (Burkholderia cepacia (strain J2315)).